The following is a 262-amino-acid chain: Acetylglutamate kinase (262 aa).

Residues 46–47 (GG), Arg-68, and Asn-160 contribute to the substrate site.

It belongs to the acetylglutamate kinase family. ArgB subfamily.

It localises to the cytoplasm. The catalysed reaction is N-acetyl-L-glutamate + ATP = N-acetyl-L-glutamyl 5-phosphate + ADP. Its pathway is amino-acid biosynthesis; L-arginine biosynthesis; N(2)-acetyl-L-ornithine from L-glutamate: step 2/4. Functionally, catalyzes the ATP-dependent phosphorylation of N-acetyl-L-glutamate. This Shewanella amazonensis (strain ATCC BAA-1098 / SB2B) protein is Acetylglutamate kinase.